The sequence spans 224 residues: Phosphoribosylformylglycinamidine synthase subunit PurQ (224 aa).

In terms of domain architecture, Glutamine amidotransferase type-1 spans F3–A224. The active-site Nucleophile is C86. Residues H195 and E197 contribute to the active site.

Part of the FGAM synthase complex composed of 1 PurL, 1 PurQ and 2 PurS subunits.

The protein localises to the cytoplasm. It catalyses the reaction N(2)-formyl-N(1)-(5-phospho-beta-D-ribosyl)glycinamide + L-glutamine + ATP + H2O = 2-formamido-N(1)-(5-O-phospho-beta-D-ribosyl)acetamidine + L-glutamate + ADP + phosphate + H(+). The catalysed reaction is L-glutamine + H2O = L-glutamate + NH4(+). Its pathway is purine metabolism; IMP biosynthesis via de novo pathway; 5-amino-1-(5-phospho-D-ribosyl)imidazole from N(2)-formyl-N(1)-(5-phospho-D-ribosyl)glycinamide: step 1/2. Its function is as follows. Part of the phosphoribosylformylglycinamidine synthase complex involved in the purines biosynthetic pathway. Catalyzes the ATP-dependent conversion of formylglycinamide ribonucleotide (FGAR) and glutamine to yield formylglycinamidine ribonucleotide (FGAM) and glutamate. The FGAM synthase complex is composed of three subunits. PurQ produces an ammonia molecule by converting glutamine to glutamate. PurL transfers the ammonia molecule to FGAR to form FGAM in an ATP-dependent manner. PurS interacts with PurQ and PurL and is thought to assist in the transfer of the ammonia molecule from PurQ to PurL. The sequence is that of Phosphoribosylformylglycinamidine synthase subunit PurQ from Trichormus variabilis (strain ATCC 29413 / PCC 7937) (Anabaena variabilis).